The primary structure comprises 396 residues: S-adenosylmethionine synthase (396 aa).

Residue His14 participates in ATP binding. Mg(2+) is bound at residue Asp16. Glu42 contributes to the K(+) binding site. Residues Glu55 and Gln98 each coordinate L-methionine. Residues 98–108 (QSPDIALGVNK) are flexible loop. ATP is bound by residues 174 to 176 (DGK), 241 to 242 (RF), Asp250, 256 to 257 (RK), Ala273, and Lys277. Asp250 contributes to the L-methionine binding site. Position 281 (Lys281) interacts with L-methionine.

This sequence belongs to the AdoMet synthase family. As to quaternary structure, homotetramer; dimer of dimers. It depends on Mg(2+) as a cofactor. K(+) serves as cofactor.

It localises to the cytoplasm. The enzyme catalyses L-methionine + ATP + H2O = S-adenosyl-L-methionine + phosphate + diphosphate. The protein operates within amino-acid biosynthesis; S-adenosyl-L-methionine biosynthesis; S-adenosyl-L-methionine from L-methionine: step 1/1. Functionally, catalyzes the formation of S-adenosylmethionine (AdoMet) from methionine and ATP. The overall synthetic reaction is composed of two sequential steps, AdoMet formation and the subsequent tripolyphosphate hydrolysis which occurs prior to release of AdoMet from the enzyme. The sequence is that of S-adenosylmethionine synthase from Pseudothermotoga lettingae (strain ATCC BAA-301 / DSM 14385 / NBRC 107922 / TMO) (Thermotoga lettingae).